Here is a 316-residue protein sequence, read N- to C-terminus: 4-hydroxy-3-methylbut-2-enyl diphosphate reductase (316 aa).

Cys12 is a binding site for [4Fe-4S] cluster. The (2E)-4-hydroxy-3-methylbut-2-enyl diphosphate site is built by His43 and His81. The dimethylallyl diphosphate site is built by His43 and His81. His43 and His81 together coordinate isopentenyl diphosphate. Residue Cys103 participates in [4Fe-4S] cluster binding. His131 serves as a coordination point for (2E)-4-hydroxy-3-methylbut-2-enyl diphosphate. Position 131 (His131) interacts with dimethylallyl diphosphate. His131 is an isopentenyl diphosphate binding site. Glu133 serves as the catalytic Proton donor. Thr170 provides a ligand contact to (2E)-4-hydroxy-3-methylbut-2-enyl diphosphate. [4Fe-4S] cluster is bound at residue Cys198. (2E)-4-hydroxy-3-methylbut-2-enyl diphosphate is bound by residues Ser226, Asn228, and Ser271. Ser226, Asn228, and Ser271 together coordinate dimethylallyl diphosphate. Residues Ser226, Asn228, and Ser271 each coordinate isopentenyl diphosphate.

The protein belongs to the IspH family. It depends on [4Fe-4S] cluster as a cofactor.

The catalysed reaction is isopentenyl diphosphate + 2 oxidized [2Fe-2S]-[ferredoxin] + H2O = (2E)-4-hydroxy-3-methylbut-2-enyl diphosphate + 2 reduced [2Fe-2S]-[ferredoxin] + 2 H(+). It catalyses the reaction dimethylallyl diphosphate + 2 oxidized [2Fe-2S]-[ferredoxin] + H2O = (2E)-4-hydroxy-3-methylbut-2-enyl diphosphate + 2 reduced [2Fe-2S]-[ferredoxin] + 2 H(+). Its pathway is isoprenoid biosynthesis; dimethylallyl diphosphate biosynthesis; dimethylallyl diphosphate from (2E)-4-hydroxy-3-methylbutenyl diphosphate: step 1/1. The protein operates within isoprenoid biosynthesis; isopentenyl diphosphate biosynthesis via DXP pathway; isopentenyl diphosphate from 1-deoxy-D-xylulose 5-phosphate: step 6/6. Its function is as follows. Catalyzes the conversion of 1-hydroxy-2-methyl-2-(E)-butenyl 4-diphosphate (HMBPP) into a mixture of isopentenyl diphosphate (IPP) and dimethylallyl diphosphate (DMAPP). Acts in the terminal step of the DOXP/MEP pathway for isoprenoid precursor biosynthesis. The polypeptide is 4-hydroxy-3-methylbut-2-enyl diphosphate reductase (Bacillus cereus (strain B4264)).